A 346-amino-acid chain; its full sequence is O-methyltransferase atr3 (346 aa).

Disordered regions lie at residues 1–22 (MTSVDTMPPPMVRLESQPDDLM) and 52–88 (GLKSHPVVTTGTEKTGVMPPLQPESKKNNKGVPWYHA). Residues 190–191 (DL) and 217–218 (DI) each bind S-adenosyl-L-methionine.

Belongs to the class I-like SAM-binding methyltransferase superfamily. As to quaternary structure, homodimer.

It carries out the reaction 4-O-demethylbarbatate + S-adenosyl-L-methionine = proatranorin I + S-adenosyl-L-homocysteine. Its pathway is secondary metabolite biosynthesis; terpenoid biosynthesis. Functionally, O-methyltransferase; part of the gene cluster that mediates the biosynthesis of atranorin, a depside of polyketide origin that accumulates in the cortical or medullary layers of lichen thalli. Atr3 methylates the carboxyl group of 4-O-demethylbarbatic acid to yield proatranorin I. Atr3 is also able to methylate the atr2 product proatranorin III to produce the final compound atranorin. The first step in the pathway is performed by the non-reducing polyketide synthase atr1 that produces 4-O-demethylbarbatic acid composed of two 3-methylorsellinic acid (3MOA) moieties. The pathway continues with the actions of the cytochrome P450 monooygenase atr2 that catalizes the oxidation of c-9 and the O-methyltransferase atr3 that performs the methylation of the carboxyl group to yield atranorin, via the proatranorin II and III intermediates if atr2 acts first, or the proatranorin I intermediate if atr3 acts first. The sequence is that of O-methyltransferase atr3 from Stereocaulon alpinum (Alpine snow lichen).